The sequence spans 153 residues: Superoxide dismutase [Cu-Zn] (153 aa).

His45, His47, and His62 together coordinate Cu cation. Cys56 and Cys145 are oxidised to a cystine. Zn(2+)-binding residues include His62, His70, His79, and Asp82. His119 contacts Cu cation.

Belongs to the Cu-Zn superoxide dismutase family. As to quaternary structure, homodimer. It depends on Cu cation as a cofactor. Zn(2+) is required as a cofactor.

The protein localises to the cytoplasm. The catalysed reaction is 2 superoxide + 2 H(+) = H2O2 + O2. In terms of biological role, destroys radicals which are normally produced within the cells and which are toxic to biological systems. This is Superoxide dismutase [Cu-Zn] from Drosophila orena (Fruit fly).